The chain runs to 474 residues: Phenylalanine--tRNA ligase alpha subunit (474 aa).

Residues Thr317, 356-358, and Tyr396 each bind L-phenylalanine; that span reads QLE. Position 398 (Glu398) interacts with Mg(2+). Phe421 serves as a coordination point for L-phenylalanine.

This sequence belongs to the class-II aminoacyl-tRNA synthetase family. Phe-tRNA synthetase alpha subunit type 2 subfamily. As to quaternary structure, tetramer of two alpha and two beta subunits. It depends on Mg(2+) as a cofactor.

It localises to the cytoplasm. It catalyses the reaction tRNA(Phe) + L-phenylalanine + ATP = L-phenylalanyl-tRNA(Phe) + AMP + diphosphate + H(+). The polypeptide is Phenylalanine--tRNA ligase alpha subunit (Methanocorpusculum labreanum (strain ATCC 43576 / DSM 4855 / Z)).